We begin with the raw amino-acid sequence, 324 residues long: Dermonecrotic toxin Hl-PLD1 (324 aa).

The first 35 residues, 1 to 35 (MAHCYYNSKRGCNRVMKTVALVVLISTVMVEESRG), serve as a signal peptide directing secretion. Histidine 50 is an active-site residue. Positions 70 and 72 each coordinate Mg(2+). Histidine 86 serves as the catalytic Nucleophile. 2 disulfides stabilise this stretch: cysteine 90/cysteine 96 and cysteine 92/cysteine 236. Aspartate 130 is a Mg(2+) binding site.

This sequence belongs to the arthropod phospholipase D family. Class II subfamily. The cofactor is Mg(2+). As to expression, expressed by the venom gland.

It localises to the secreted. The enzyme catalyses an N-(acyl)-sphingosylphosphocholine = an N-(acyl)-sphingosyl-1,3-cyclic phosphate + choline. It catalyses the reaction an N-(acyl)-sphingosylphosphoethanolamine = an N-(acyl)-sphingosyl-1,3-cyclic phosphate + ethanolamine. It carries out the reaction a 1-acyl-sn-glycero-3-phosphocholine = a 1-acyl-sn-glycero-2,3-cyclic phosphate + choline. The catalysed reaction is a 1-acyl-sn-glycero-3-phosphoethanolamine = a 1-acyl-sn-glycero-2,3-cyclic phosphate + ethanolamine. Dermonecrotic toxins cleave the phosphodiester linkage between the phosphate and headgroup of certain phospholipids (sphingolipid and lysolipid substrates), forming an alcohol (often choline) and a cyclic phosphate. This toxin acts on sphingomyelin (SM) with a high activity. It may also act on ceramide phosphoethanolamine (CPE), lysophosphatidylcholine (LPC) and lysophosphatidylethanolamine (LPE), but not on lysophosphatidylserine (LPS), and lysophosphatidylglycerol (LPG). It acts by transphosphatidylation, releasing exclusively cyclic phosphate products as second products. In vivo, shows dermonecrotic activity when intradermally injected into rabbit skin and is lethal to mice. Induces increased vascular permeability, edema, inflammatory response, and platelet aggregation. Does not show hemolytic activity (at up to 50 ug). The protein is Dermonecrotic toxin Hl-PLD1 of Hemiscorpius lepturus (Scorpion).